Here is a 271-residue protein sequence, read N- to C-terminus: uncharacterized protein (271 aa).

The protein belongs to the HAD-like hydrolase superfamily.

This is an uncharacterized protein from Staphylococcus aureus (strain Mu50 / ATCC 700699).